A 459-amino-acid polypeptide reads, in one-letter code: VGFKAGVKEYKLTYYTPDYETKDTDILAAFRVTPQPGVPPEEAGAAVAAESSTGTWTTVWTDGLTSLDRYKGRCYHIEPVPGEESQFIAYVAYPLDLFEEGSVTNLFTSIVGNVFGFKALRALRLEDLRIPPAYVKTFQGPPHGIQVERDKLNKYGRPLLGCTIKPKLGLSAKNYGRAVYECLRGGLDFTKDDENVNSQPFMRWRDRFLFCAEALFKAQAETGEIKGHYLNATAGTCEEMMKRAIFARELGVPIVMHDYLTGGFTANTSLAHYCRDNGLLLHIHRAMHAVIDRQKNHGMHFRVLAKALRMSGGDHIHAGTVVGKLEGEREITLGFVDLLRDDFIEKDRSRGIYFTQDWVSLPGVLPVASGGIHVWHMPALTEIFGDDSVLQFGGGTLGHPWGNAPGAVANRVALEACVQARNEGRDLAREGNEVIREAAKWSPELAAACEVWKEIKFEF.

K4 carries the N6,N6,N6-trimethyllysine modification. The substrate site is built by N113 and T163. K165 serves as the catalytic Proton acceptor. Residue K167 coordinates substrate. Residues K191, D193, and E194 each contribute to the Mg(2+) site. At K191 the chain carries N6-carboxylysine. The Proton acceptor role is filled by H284. R285, H317, and S369 together coordinate substrate.

It belongs to the RuBisCO large chain family. Type I subfamily. In terms of assembly, heterohexadecamer of 8 large chains and 8 small chains; disulfide-linked. The disulfide link is formed within the large subunit homodimers. Mg(2+) serves as cofactor. In terms of processing, the disulfide bond which can form in the large chain dimeric partners within the hexadecamer appears to be associated with oxidative stress and protein turnover.

It localises to the plastid. Its subcellular location is the chloroplast. The enzyme catalyses 2 (2R)-3-phosphoglycerate + 2 H(+) = D-ribulose 1,5-bisphosphate + CO2 + H2O. The catalysed reaction is D-ribulose 1,5-bisphosphate + O2 = 2-phosphoglycolate + (2R)-3-phosphoglycerate + 2 H(+). Functionally, ruBisCO catalyzes two reactions: the carboxylation of D-ribulose 1,5-bisphosphate, the primary event in carbon dioxide fixation, as well as the oxidative fragmentation of the pentose substrate in the photorespiration process. Both reactions occur simultaneously and in competition at the same active site. The protein is Ribulose bisphosphate carboxylase large chain of Geum quellyon (Chilean avens).